The following is a 239-amino-acid chain: Phosphoribosylaminoimidazole-succinocarboxamide synthase (239 aa).

It belongs to the SAICAR synthetase family.

The catalysed reaction is 5-amino-1-(5-phospho-D-ribosyl)imidazole-4-carboxylate + L-aspartate + ATP = (2S)-2-[5-amino-1-(5-phospho-beta-D-ribosyl)imidazole-4-carboxamido]succinate + ADP + phosphate + 2 H(+). It participates in purine metabolism; IMP biosynthesis via de novo pathway; 5-amino-1-(5-phospho-D-ribosyl)imidazole-4-carboxamide from 5-amino-1-(5-phospho-D-ribosyl)imidazole-4-carboxylate: step 1/2. The polypeptide is Phosphoribosylaminoimidazole-succinocarboxamide synthase (Bacillus mycoides (strain KBAB4) (Bacillus weihenstephanensis)).